The primary structure comprises 184 residues: MLIGYVRVSTNDQNTDLQRNALNCAGCELIFEDKISGTKSERPGLKKLLRTLSAGDTLVVWKLDRLGRSMRHLVVLVEELRERGINFRSLTDSIDTSTPMGRFFFHVMGALAEMERELIVERTKAGLETARAQGRIGGRRPKLTPEQWAQAGRLIAAGTPRQKVAIIYDVGVSTLYKRFPAGDK.

The 134-residue stretch at 1–134 (MLIGYVRVST…AGLETARAQG (134 aa)) folds into the Resolvase/invertase-type recombinase catalytic domain. Serine 9 acts as the O-(5'-phospho-DNA)-serine intermediate in catalysis. The segment at residues 161–180 (RQKVAIIYDVGVSTLYKRFP) is a DNA-binding region (H-T-H motif).

The protein belongs to the site-specific recombinase resolvase family.

Its function is as follows. This protein catalyzes the inversion of an 1800-bp E.coli DNA fragment, the P region, which can exist in either orientation. The function of the inversion is not yet clear. In Escherichia coli (strain K12), this protein is Serine recombinase PinE (pinE).